The chain runs to 388 residues: Succinyl-diaminopimelate desuccinylase (388 aa).

H71 is a binding site for Zn(2+). The active site involves D73. D104 provides a ligand contact to Zn(2+). Residue E143 is the Proton acceptor of the active site. Zn(2+) is bound by residues E144, E172, and H361.

This sequence belongs to the peptidase M20A family. DapE subfamily. In terms of assembly, homodimer. Zn(2+) is required as a cofactor. It depends on Co(2+) as a cofactor.

It catalyses the reaction N-succinyl-(2S,6S)-2,6-diaminopimelate + H2O = (2S,6S)-2,6-diaminopimelate + succinate. It participates in amino-acid biosynthesis; L-lysine biosynthesis via DAP pathway; LL-2,6-diaminopimelate from (S)-tetrahydrodipicolinate (succinylase route): step 3/3. Functionally, catalyzes the hydrolysis of N-succinyl-L,L-diaminopimelic acid (SDAP), forming succinate and LL-2,6-diaminopimelate (DAP), an intermediate involved in the bacterial biosynthesis of lysine and meso-diaminopimelic acid, an essential component of bacterial cell walls. This Bradyrhizobium diazoefficiens (strain JCM 10833 / BCRC 13528 / IAM 13628 / NBRC 14792 / USDA 110) protein is Succinyl-diaminopimelate desuccinylase.